A 196-amino-acid chain; its full sequence is Probable GTP-binding protein EngB (196 aa).

In terms of domain architecture, EngB-type G spans 22-196 (NLPEIALSGR…GNWIEEKISK (175 aa)). GTP is bound by residues 30 to 37 (GRSNVGKS), 57 to 61 (GKTQT), 75 to 78 (DVPG), 142 to 145 (TKID), and 175 to 177 (FSS). Mg(2+) contacts are provided by S37 and T59.

Belongs to the TRAFAC class TrmE-Era-EngA-EngB-Septin-like GTPase superfamily. EngB GTPase family. Requires Mg(2+) as cofactor.

Its function is as follows. Necessary for normal cell division and for the maintenance of normal septation. This chain is Probable GTP-binding protein EngB, found in Lactobacillus helveticus (strain DPC 4571).